A 275-amino-acid chain; its full sequence is Ribosomal RNA small subunit methyltransferase A (275 aa).

S-adenosyl-L-methionine-binding residues include asparagine 20, leucine 22, glycine 47, glutamate 68, aspartate 90, and asparagine 110.

It belongs to the class I-like SAM-binding methyltransferase superfamily. rRNA adenine N(6)-methyltransferase family. RsmA subfamily.

It is found in the cytoplasm. It carries out the reaction adenosine(1518)/adenosine(1519) in 16S rRNA + 4 S-adenosyl-L-methionine = N(6)-dimethyladenosine(1518)/N(6)-dimethyladenosine(1519) in 16S rRNA + 4 S-adenosyl-L-homocysteine + 4 H(+). In terms of biological role, specifically dimethylates two adjacent adenosines (A1518 and A1519) in the loop of a conserved hairpin near the 3'-end of 16S rRNA in the 30S particle. May play a critical role in biogenesis of 30S subunits. The chain is Ribosomal RNA small subunit methyltransferase A from Chlorobaculum tepidum (strain ATCC 49652 / DSM 12025 / NBRC 103806 / TLS) (Chlorobium tepidum).